The primary structure comprises 360 residues: Photosystem II protein D1 (360 aa).

Helical transmembrane passes span 29-46 (YIGW…AATA), 118-133 (HFLL…QWEL), and 142-156 (WICV…SATA). His118 is a chlorophyll a binding site. Tyr126 contributes to the pheophytin a binding site. The [CaMn4O5] cluster site is built by Asp170 and Glu189. A helical membrane pass occupies residues 197–218 (FHMLGVAGVFGGSLFSAMHGSL). Chlorophyll a is bound at residue His198. A quinone contacts are provided by residues His215 and 264 to 265 (SF). Position 215 (His215) interacts with Fe cation. His272 lines the Fe cation pocket. Residues 274–288 (FLAAWPVVGIWFTAL) traverse the membrane as a helical segment. 4 residues coordinate [CaMn4O5] cluster: His332, Glu333, Asp342, and Ala344. A propeptide spanning residues 345–360 (AGEVAPVALTAPAING) is cleaved from the precursor.

It belongs to the reaction center PufL/M/PsbA/D family. As to quaternary structure, PSII is composed of 1 copy each of membrane proteins PsbA, PsbB, PsbC, PsbD, PsbE, PsbF, PsbH, PsbI, PsbJ, PsbK, PsbL, PsbM, PsbT, PsbX, PsbY, PsbZ, Psb30/Ycf12, peripheral proteins PsbO, CyanoQ (PsbQ), PsbU, PsbV and a large number of cofactors. It forms dimeric complexes. The D1/D2 heterodimer binds P680, chlorophylls that are the primary electron donor of PSII, and subsequent electron acceptors. It shares a non-heme iron and each subunit binds pheophytin, quinone, additional chlorophylls, carotenoids and lipids. D1 provides most of the ligands for the Mn4-Ca-O5 cluster of the oxygen-evolving complex (OEC). There is also a Cl(-1) ion associated with D1 and D2, which is required for oxygen evolution. The PSII complex binds additional chlorophylls, carotenoids and specific lipids. serves as cofactor. Tyr-161 forms a radical intermediate that is referred to as redox-active TyrZ, YZ or Y-Z. In terms of processing, C-terminally processed by CtpA; processing is essential to allow assembly of the oxygen-evolving complex and thus photosynthetic growth.

The protein resides in the cellular thylakoid membrane. It catalyses the reaction 2 a plastoquinone + 4 hnu + 2 H2O = 2 a plastoquinol + O2. In terms of biological role, photosystem II (PSII) is a light-driven water:plastoquinone oxidoreductase that uses light energy to abstract electrons from H(2)O, generating O(2) and a proton gradient subsequently used for ATP formation. It consists of a core antenna complex that captures photons, and an electron transfer chain that converts photonic excitation into a charge separation. The D1/D2 (PsbA/PsbD) reaction center heterodimer binds P680, the primary electron donor of PSII as well as several subsequent electron acceptors. This is Photosystem II protein D1 from Microchaete diplosiphon (Fremyella diplosiphon).